Consider the following 644-residue polypeptide: uncharacterized protein (644 aa).

The segment at 1–39 (MKANGLDNDPARTRMERTDIDSEHPEAQPLLNNNHRTLG) is disordered. The Cytoplasmic segment spans residues 1 to 90 (MKANGLDNDP…ILNILILINT (90 aa)). Basic and acidic residues predominate over residues 9–26 (DPARTRMERTDIDSEHPE). Phosphoserine is present on residues S22, S56, and S63. The helical transmembrane segment at 91–111 (IWLVTTLISDFFFNINILFGF) threads the bilayer. Over 112–122 (SNRYASFNDLT) the chain is Vacuolar. Residues 123-143 (LIFISIIANSFNLWFNKLGLY) traverse the membrane as a helical segment. Over 144-147 (SALD) the chain is Cytoplasmic. Residues 148-168 (YSLNVTLCVLTLFNLALTYLI) traverse the membrane as a helical segment. Residues 169–174 (KYTRQR) lie on the Vacuolar side of the membrane. The chain crosses the membrane as a helical span at residues 175 to 195 (IGFVGTFTYLWTSFSFFIGAI). Over 196–271 (LDWYLLFYNN…EWVSIGFRNT (76 aa)) the chain is Cytoplasmic. The disordered stretch occupies residues 225-251 (NENHTNSTENRDRSQYGSGSPTPTHRS). The segment covering 239-251 (QYGSGSPTPTHRS) has biased composition (polar residues). S244 bears the Phosphoserine mark. A helical transmembrane segment spans residues 272-292 (IKFLILIFFALFTLNTLLTTL). The Vacuolar segment spans residues 293 to 644 (DTYRLTHKLP…IGELGKLTED (352 aa)). Residues 348-619 (PIILFEHGGY…IVEGGHEIYK (272 aa)) form the AB hydrolase-1 domain. Residues 469–492 (GRGDGDDGDDGNGNDGDGRNHDKT) form a disordered region.

It is found in the vacuole membrane. This is an uncharacterized protein from Saccharomyces cerevisiae (strain YJM789) (Baker's yeast).